The sequence spans 594 residues: Transcriptional repressor p66-beta (594 aa).

Ser-17 is modified (phosphoserine). Glycyl lysine isopeptide (Lys-Gly) (interchain with G-Cter in SUMO2) cross-links involve residues Lys-33 and Lys-66. Positions 62 to 143 (ELPTKQDGSG…ASSPRSSSRM (82 aa)) are disordered. Residues 74-89 (GYEEKLNGNLRPHGDN) show a composition bias toward basic and acidic residues. A Glycyl lysine isopeptide (Lys-Gly) (interchain with G-Cter in SUMO2) cross-link involves residue Lys-98. Positions 109–119 (SARRSEPDRGR) are enriched in basic and acidic residues. Thr-121 carries the phosphothreonine modification. Phosphoserine occurs at positions 123, 130, 135, and 136. A compositionally biased stretch (low complexity) spans 130–140 (SDNEASSPRSS). Positions 141–195 (SRMEERLKAANLEMFKGKGMEERQQLIKQLRDELRLEEARLVLLKKLRQSQLQKE) form a coiled coil. Lys-148 participates in a covalent cross-link: Glycyl lysine isopeptide (Lys-Gly) (interchain with G-Cter in SUMO2). A CR1; interaction with MBD2 and MBD3 region spans residues 166–191 (LIKQLRDELRLEEARLVLLKKLRQSQ). Lys-200 participates in a covalent cross-link: Glycyl lysine isopeptide (Lys-Gly) (interchain with G-Cter in SUMO2). At Ser-209 the chain carries Phosphoserine. Residues 214 to 237 (SPAHVGQQGLSKLPSRPGAQGIEP) form a disordered region. A Glycyl lysine isopeptide (Lys-Gly) (interchain with G-Cter in SUMO2) cross-link involves residue Lys-282. A phosphoserine mark is found at Ser-334, Ser-339, and Ser-341. The tract at residues 341-481 (SAMSDAANSQ…QEQEIEQRLQ (141 aa)) is CR2; histone tail-binding. Residues Lys-354, Lys-455, and Lys-468 each participate in a glycyl lysine isopeptide (Lys-Gly) (interchain with G-Cter in SUMO2) cross-link. A GATA-type zinc finger spans residues 415–468 (RVEPFVCAQCRTDFTPHWKQEKNGKILCEQCMTSNQKKALKAEHTNRLKNAFVK). The stretch at 450-483 (QKKALKAEHTNRLKNAFVKALQQEQEIEQRLQQQ) forms a coiled coil. A Phosphoserine modification is found at Ser-487. Lys-499 is covalently cross-linked (Glycyl lysine isopeptide (Lys-Gly) (interchain with G-Cter in SUMO2)).

In terms of assembly, homooligomer. Component of the nucleosome remodeling and deacetylase (NuRD) repressor complex, composed of core proteins MTA1, MTA2, MTA3, RBBP4, RBBP7, HDAC1, HDAC2, MBD2, MBD3, and peripherally associated proteins CDK2AP1, CDK2AP2, GATAD2A, GATAD2B, CHD3, CHD4 and CHD5. The exact stoichiometry of the NuRD complex is unknown, and some subunits such as MBD2 and MBD3, GATAD2A and GATAD2B, and CHD3, CHD4 and CHD5 define mutually exclusive NuRD complexes. Interacts with MBD2; this is required for the enhancement of MBD2-mediated repression and for targeting to the chromatin. Interacts with MBD3. Component of the MeCP1 histone deacetylase complex. Interacts with histone tails, including that of histones H2A, H2B, H3 and H4. Interacts with ERCC6.

It is found in the nucleus speckle. It localises to the nucleus. Its subcellular location is the chromosome. Its function is as follows. Transcriptional repressor. Acts as a component of the histone deacetylase NuRD complex which participates in the remodeling of chromatin. Enhances MBD2-mediated repression. Efficient repression requires the presence of GATAD2A. Targets MBD3 to discrete loci in the nucleus. May play a role in synapse development. The sequence is that of Transcriptional repressor p66-beta (Gatad2b) from Mus musculus (Mouse).